A 224-amino-acid chain; its full sequence is Ribonuclease HII (224 aa).

Positions 1 to 210 constitute an RNase H type-2 domain; that stretch reads MKLGGIDEAG…LKKIEEKLQK (210 aa). Asp-7, Glu-8, and Asp-105 together coordinate a divalent metal cation.

Belongs to the RNase HII family. Requires Mn(2+) as cofactor. The cofactor is Mg(2+).

The protein resides in the cytoplasm. The enzyme catalyses Endonucleolytic cleavage to 5'-phosphomonoester.. In terms of biological role, endonuclease that specifically degrades the RNA of RNA-DNA hybrids. The sequence is that of Ribonuclease HII from Thermococcus sibiricus (strain DSM 12597 / MM 739).